We begin with the raw amino-acid sequence, 159 residues long: Aphid transmission protein (159 aa).

This sequence belongs to the caulimoviridae ORF II family.

Its function is as follows. This protein is involved in virus transmission. In Arabidopsis thaliana (Mouse-ear cress), this protein is Aphid transmission protein.